The following is a 314-amino-acid chain: MRFFIADDDRAVRSILRQIIEDEDLGEAAGEADDGSQVEGHMLQFKQIDILLIDLLMPGRDGIETIRQIQNTYSGKIVMISQVEAKEMVGEAYSLGIEYFIHKPINRIEIVTVLQKVKERIELEHSIGAIQHSLSRLVNRTERKARPQQKSDSGLKEAGTFLLSELGMMGEGGAHDLMAVLQYLAEHEQSEPHEKQSPSLKQIFTQVAVRKLGTGASQTEVNREMKASEQRIRRAIIHSLHHFASLGTTDFSNPKFETYASKFFDFPVVSQKMKELQSKDAKPLAPARINMKKFIHVFFLEAKLLHETMKQRRI.

Positions 2–118 (RFFIADDDRA…EIVTVLQKVK (117 aa)) constitute a Response regulatory domain. Asp54 is modified (4-aspartylphosphate).

Post-translationally, phosphorylated by GlnK.

The protein localises to the cytoplasm. Its function is as follows. Member of the two-component regulatory system GlnL/GlnK that positively regulates the expression of the glsA-glnT operon in response to glutamine. GlnL binds the promoter region of glsA-glnT in vitro. In Bacillus subtilis (strain 168), this protein is Transcriptional regulatory protein GlnL (glnL).